A 932-amino-acid chain; its full sequence is MVRPSSSSSASASAARSGAAKRKRNLPTATNPTTRASVAANVKGKGKTKALELDLVVSDDGEEDGELDLESDSGDDDANDDDDNDNEQDDFPEIDLEDSDDDQDVEDEDEPGAQEEVDSDNNKQASTQVHDIQVEEDDSSEEGYNSSDIDNSDFDDDADEGDLAYDSADEDERASAFAARSDASQTSIDEELSRMMSRYSSKPDEHSGSLSATNKLGIPRSQAAQAFDLRVRNPDGSAKGVFKRSEITGEMKRVYPEIDAAYDSDSSTEDPENRIGNVPLEWYDDLPHIGYDINGRKVMKPATKDELDKFLDTVDGDGEAWFSARDKSTGKDVRLSDEELAIIRKLQNAEIPDDAYDPYEDYVDWFTGEDKVMQTALSGRPEPKSRFVPSKWEHKKVMKIVRAIREGRIVPGAAANKDAKPKFYNIWADAHENDTRSPWAVMAAPKLALPGHAESYNPPAEYLFNEQEQKEWQEAEAEDRKQNFLPTKHDSLRRVGAYQNFVQERFERCLDLYLAPRMMRKKLDIHNPENLLPKLPSPKELRPFPITTSVVYVHPDGGRVRCLSVDPTGNWLVTGGDDGRARLWDVAIGRCTASWDVCEGMPKAERSAVHSIAWCPTKNYSLFTAVVHGRVAVIAPPQTQNYAKTSANAISSKSASSSSGATATSTASFLYATSAAATSMPSKPDARSPVAWTRPSEAERRTGVAMHLNITSPSAANLKTVVWHNKGDYFATVCPDSAAGSAGLLIHQLSKHRSQSPFRKASKGSSIQKLVFHPTKPWIFVATQRYIRIYDLMAQSLIKTLQSGFKWISTLDVHPSGDHLMVGSYDKKLAWFDLDLSARPYKVLKYHARAIRSVHFSTSWNLVADASDDGTLQLFYAKVGADYGENLTLVPLKVLRGHEVKNGLGVLDVKWHPNQPWLFSAGADGNALLWTT.

The span at 1-18 shows a compositional bias: low complexity; sequence MVRPSSSSSASASAARSG. The disordered stretch occupies residues 1–229; it reads MVRPSSSSSA…RSQAAQAFDL (229 aa). Residues 27–36 are compositionally biased toward polar residues; sequence PTATNPTTRA. Acidic residues-rich tracts occupy residues 57–119 and 150–172; these read VSDD…EVDS and DNSD…DEDE. Positions 175–184 are enriched in low complexity; the sequence is SAFAARSDAS. WD repeat units lie at residues 555-594 and 604-644; these read PDGG…CTAS and AERS…NYAK. A disordered region spans residues 679 to 698; that stretch reads SMPSKPDARSPVAWTRPSEA. WD repeat units follow at residues 762-800, 803-842, 846-885, and 901-932; these read SKGS…LIKT, SGFK…RPYK, YHAR…DYGE, and KNGL…LWTT.

Belongs to the WD repeat BOP1/ERB1 family. As to quaternary structure, component of the NOP7 complex, composed of ERB1, NOP7 and YTM1. The complex is held together by ERB1, which interacts with NOP7 via its N-terminal domain and with YTM1 via a high-affinity interaction between the seven-bladed beta-propeller domains of the 2 proteins. The NOP7 complex associates with the 66S pre-ribosome.

It localises to the nucleus. The protein resides in the nucleolus. Its subcellular location is the nucleoplasm. In terms of biological role, component of the NOP7 complex, which is required for maturation of the 25S and 5.8S ribosomal RNAs and formation of the 60S ribosome. This is Ribosome biogenesis protein ERB1 from Mycosarcoma maydis (Corn smut fungus).